Consider the following 249-residue polypeptide: Putative [LysW]-aminoadipate/[LysW]-glutamate kinase (249 aa).

Substrate is bound by residues Arg63 and Asn166.

This sequence belongs to the acetylglutamate kinase family. LysZ subfamily.

It is found in the cytoplasm. It catalyses the reaction [amino-group carrier protein]-C-terminal-N-(1,4-dicarboxybutan-1-yl)-L-glutamine + ATP = [amino-group carrier protein]-C-terminal-N-(1-carboxy-5-phosphooxy-5-oxopentan-1-yl)-L-glutamine + ADP. The enzyme catalyses [amino-group carrier protein]-C-terminal-gamma-(L-glutamyl)-L-glutamate + ATP = [amino-group carrier protein]-C-terminal-gamma-(5-phospho-L-glutamyl)-L-glutamate + ADP. The protein operates within amino-acid biosynthesis; L-lysine biosynthesis via AAA pathway; L-lysine from L-alpha-aminoadipate (Thermus route): step 2/5. It functions in the pathway amino-acid biosynthesis; L-arginine biosynthesis. In terms of biological role, involved in both the arginine and lysine biosynthetic pathways. Phosphorylates the LysW-bound precursors glutamate (for arginine biosynthesis), respectively alpha-aminoadipate (for lysine biosynthesis). This Pyrococcus furiosus (strain ATCC 43587 / DSM 3638 / JCM 8422 / Vc1) protein is Putative [LysW]-aminoadipate/[LysW]-glutamate kinase.